We begin with the raw amino-acid sequence, 532 residues long: uncharacterized protein (532 aa).

13 helical membrane-spanning segments follow: residues 13-33, 53-73, 80-100, 111-131, 142-162, 169-189, 203-223, 231-251, 273-293, 306-326, 334-354, 361-381, and 483-503; these read MSLLIVLMAGLFLAILNQTLL, WLTTGYMLVNGVLIPLSAFLI, SLFLVAMFCFTLGTLVCGIAP, IQAVGGGILQPLVMTTILLIF, IFGLAMMFAPAVGPTLSGWII, IMFYGLVPIGAIVIIVAFFIF, LGAILSIVGFASLLYGVSEAG, IVLSTVIIGAIAIVAFVVQQL, VINIIITVALYTGMFLLPIYL, LLLLPGAIVMLIMSPISGILF, LAIIGLLVTVVTTYQYTQLTI, IMLIYSIRAFGMSLLMMPVMT, and INDAFMWATLFCVAGLILSIF.

The protein belongs to the major facilitator superfamily. EmrB family.

The protein localises to the cell membrane. This is an uncharacterized protein from Bacillus subtilis (strain 168).